A 456-amino-acid polypeptide reads, in one-letter code: GTPase Der (456 aa).

2 EngA-type G domains span residues 3 to 167 (FTIA…PPSD) and 185 to 360 (IRVA…AVWN). GTP contacts are provided by residues 9–16 (GRPNVGKS), 56–60 (DTAGL), and 119–122 (NKSE). The interval 162–181 (IVPPSDDEDDEREETDEERA) is disordered. Residues 166 to 178 (SDDEDDEREETDE) show a composition bias toward acidic residues. Residues 191 to 198 (GRPNAGKS), 238 to 242 (DTAGL), and 303 to 306 (NKWD) each bind GTP. The 85-residue stretch at 361–445 (RRVPTAALNR…PVRITLREKA (85 aa)) folds into the KH-like domain.

This sequence belongs to the TRAFAC class TrmE-Era-EngA-EngB-Septin-like GTPase superfamily. EngA (Der) GTPase family. In terms of assembly, associates with the 50S ribosomal subunit.

In terms of biological role, GTPase that plays an essential role in the late steps of ribosome biogenesis. This Bradyrhizobium sp. (strain ORS 278) protein is GTPase Der.